A 20-amino-acid polypeptide reads, in one-letter code: Dentinal fluid transport-stimulating peptide (20 aa).

The disordered stretch occupies residues 1 to 20 (GVIAWELQHNEPGRKDSTAG). Basic and acidic residues predominate over residues 8 to 20 (QHNEPGRKDSTAG).

Functionally, this peptide stimulates the transport of dentinal fluid, which is important for the prevention of dental caries. The chain is Dentinal fluid transport-stimulating peptide from Rattus norvegicus (Rat).